The chain runs to 389 residues: 1-deoxy-D-xylulose 5-phosphate reductoisomerase (389 aa).

NADPH-binding residues include Ser-11, Gly-12, Ser-13, Val-14, Asn-39, and Asn-122. Position 123 (Lys-123) interacts with 1-deoxy-D-xylulose 5-phosphate. An NADPH-binding site is contributed by Glu-124. Asp-148 provides a ligand contact to Mn(2+). Residues Ser-149, Glu-150, Ser-174, and His-197 each coordinate 1-deoxy-D-xylulose 5-phosphate. Glu-150 lines the Mn(2+) pocket. Gly-203 contributes to the NADPH binding site. Residues Ser-210, Asn-215, Lys-216, and Glu-219 each coordinate 1-deoxy-D-xylulose 5-phosphate. Glu-219 contributes to the Mn(2+) binding site.

It belongs to the DXR family. Mg(2+) serves as cofactor. The cofactor is Mn(2+).

The enzyme catalyses 2-C-methyl-D-erythritol 4-phosphate + NADP(+) = 1-deoxy-D-xylulose 5-phosphate + NADPH + H(+). It participates in isoprenoid biosynthesis; isopentenyl diphosphate biosynthesis via DXP pathway; isopentenyl diphosphate from 1-deoxy-D-xylulose 5-phosphate: step 1/6. Catalyzes the NADPH-dependent rearrangement and reduction of 1-deoxy-D-xylulose-5-phosphate (DXP) to 2-C-methyl-D-erythritol 4-phosphate (MEP). The sequence is that of 1-deoxy-D-xylulose 5-phosphate reductoisomerase from Leptospira interrogans serogroup Icterohaemorrhagiae serovar copenhageni (strain Fiocruz L1-130).